We begin with the raw amino-acid sequence, 633 residues long: Endosomal/prevacuolar sodium/hydrogen exchanger (633 aa).

The signal sequence occupies residues 1–21 (MLSKVLLNIAFKVLLTTAKRA). The Lumenal segment spans residues 22-61 (VDPDDDDELLPSPDLPGSDDPIAGDPDVDLNPVTEEMFSS). Residues 25–44 (DDDDELLPSPDLPGSDDPIA) are disordered. Low complexity predominate over residues 31–42 (LPSPDLPGSDDP). A helical membrane pass occupies residues 62-82 (WALFIMLLLLISALWSSYYLT). Over 83–85 (QKR) the chain is Cytoplasmic. Residues 86-106 (IRAVHETVLSIFYGMVIGLII) traverse the membrane as a helical segment. At 107–117 (RMSPGHYIQDT) the chain is on the lumenal side. A helical transmembrane segment spans residues 118 to 138 (VTFNSSYFFNVLLPPIILNSG). An Amiloride-binding motif is present at residues 124–133 (YFFNVLLPPI). The Cytoplasmic portion of the chain corresponds to 139–152 (YELNQVNFFNNMLS). Residues 153-173 (ILIFAIPGTFISAVVIGIILY) traverse the membrane as a helical segment. Residues 174–189 (IWTFLGLESIDISFAD) are Lumenal-facing. A helical transmembrane segment spans residues 190-211 (AMSVGATLSATDPVTILSIFNA). The Cytoplasmic portion of the chain corresponds to 212–217 (YKVDPK). A helical transmembrane segment spans residues 218–238 (LYTIIFGESLLNDAISIVMFE). Over 239 to 258 (TCQKFHGQPATFSSVFEGAG) the chain is Lumenal. A helical membrane pass occupies residues 259–279 (LFLMTFSVSLLIGVLIGILVA). Over 280–288 (LLLKHTHIR) the chain is Cytoplasmic. Residues 289–308 (RYPQIESCLILLIAYESYFF) traverse the membrane as a helical segment. Over 309 to 313 (SNGCH) the chain is Lumenal. The helical transmembrane segment at 314-333 (MSGIVSLLFCGITLKHYAYY) threads the bilayer. Topologically, residues 334 to 344 (NMSRRSQITIK) are cytoplasmic. A helical membrane pass occupies residues 345–364 (YIFQLLARLSENFIFIYLGL). Topologically, residues 365–376 (ELFTEVELVYKP) are cytoplasmic. A helical transmembrane segment spans residues 377–397 (LLIIVAAISICVARWCAVFPL). Residues 398-431 (SQFVNWIYRVKTIRSMSGITGENISVPDEIPYNY) lie on the Lumenal side of the membrane. N-linked (GlcNAc...) asparagine glycosylation occurs at N420. Residues 432-452 (QMMTFWAGLRGAVGVALALGI) form a helical membrane-spanning segment. The Cytoplasmic segment spans residues 453–457 (QGEYK). A helical transmembrane segment spans residues 458–478 (FTLLATVLVVVVLTVIIFGGT). A Phosphothreonine modification is found at T490. S494 bears the Phosphoserine mark. T498 carries the phosphothreonine modification. S499 bears the Phosphoserine mark. Residues N515, N550, and N563 are each glycosylated (N-linked (GlcNAc...) asparagine). Residues 553–578 (TTGGNTFGGLNETENTSPNPARSSMD) form a disordered region. Over residues 564 to 574 (ETENTSPNPAR) the composition is skewed to polar residues. Position 569 is a phosphoserine (S569).

Belongs to the monovalent cation:proton antiporter 1 (CPA1) transporter (TC 2.A.36) family. Interacts with CYP6.

The protein resides in the endosome membrane. Its subcellular location is the prevacuolar compartment membrane. In terms of biological role, endosomal/prevacuolar electroneutral Na(+)/H(+) exchanger which mediates intracellular sequestration of Na(+) cations, regulates vacuolar pH and contributes to osmotolerance following sudden exposure to hyperosmotic media. Also contributes to the postdiauxic/stationary phase resistance to osmotic stress and allows for the continued growth of cells until the acquired osmotolerance response can occur. Involved in hygromycin resistance probably through its influence on the electrochemical proton gradient affecting secondarily the entrance of hygromycin. Mediates pH-dependent vesicle trafficking out of the endosome. Contributes to K(+) sequestration and homeostasis. This Saccharomyces cerevisiae (strain ATCC 204508 / S288c) (Baker's yeast) protein is Endosomal/prevacuolar sodium/hydrogen exchanger (NHX1).